The chain runs to 172 residues: UPF0398 protein gbs0290 (172 aa).

It belongs to the UPF0398 family.

The chain is UPF0398 protein gbs0290 from Streptococcus agalactiae serotype III (strain NEM316).